The chain runs to 1386 residues: Putative ATP-dependent RNA helicase DHX57 (1386 aa).

The span at 1–11 shows a compositional bias: basic residues; sequence MSSSVRRKGKP. Disordered regions lie at residues 1–106 and 120–147; these read MSSS…MTSE and EQDA…NDER. Gly residues-rich tracts occupy residues 12–23 and 35–50; these read GKGGGKGSSRGG and GSGG…GGGN. Residues 101-125 adopt a coiled-coil conformation; it reads LHMTSENQEKVKALLRDLQEQDADA. 2 positions are modified to phosphoserine: Ser-127 and Ser-132. Positions 133 to 143 are enriched in acidic residues; it reads GEEEDDEPDCC. The region spanning 180–220 is the UBA domain; it reads TVSPFAVQKLSRYGFNTERCQAVLRMCDGDVGASLEHLLTQ. Residues 299–326 form a C3H1-type zinc finger; that stretch reads ENSLEICKFYLKGNCKFGSKCRFKHEVP. Ser-475, Ser-477, and Ser-480 each carry phosphoserine. The region spanning 554-721 is the Helicase ATP-binding domain; it reads LNLLRKHQVV…FNSCPVITIP (168 aa). 567 to 574 serves as a coordination point for ATP; sequence GMTGCGKT. A DEVH box motif is present at residues 668-671; that stretch reads DEVH. A Helicase C-terminal domain is found at 830–1010; that stretch reads LIEALLEWIV…QLCLRIKILE (181 aa).

Belongs to the DEAD box helicase family. DEAH subfamily.

It carries out the reaction ATP + H2O = ADP + phosphate + H(+). In terms of biological role, probable ATP-binding RNA helicase. This is Putative ATP-dependent RNA helicase DHX57 (DHX57) from Homo sapiens (Human).